Here is a 133-residue protein sequence, read N- to C-terminus: Small ribosomal subunit protein bS6 (133 aa).

It belongs to the bacterial ribosomal protein bS6 family.

Its function is as follows. Binds together with bS18 to 16S ribosomal RNA. In Chlorobium limicola (strain DSM 245 / NBRC 103803 / 6330), this protein is Small ribosomal subunit protein bS6.